Consider the following 518-residue polypeptide: Probable pectinesterase/pectinesterase inhibitor 16 (518 aa).

Residues 1 to 33 form the signal peptide; it reads MASSSSISNHKIPNTLMFLVIVNFLYLIQTNSA. The interval 30–172 is pectinesterase inhibitor 16; that stretch reads TNSAVSISSN…TGLLTSSLDL (143 aa). N-linked (GlcNAc...) asparagine glycosylation is found at Asn82 and Asn161. Residues 213-502 form a pectinesterase 16 region; that stretch reads DAVVAPDGSG…FTVASFIDGN (290 aa). 2 residues coordinate substrate: Thr289 and Gln319. The active-site Proton donor; for pectinesterase activity is the Asp342. The active-site Nucleophile; for pectinesterase activity is the Asp363. The substrate site is built by Arg422 and Trp424.

This sequence in the N-terminal section; belongs to the PMEI family. In the C-terminal section; belongs to the pectinesterase family. Expressed in siliques and floral stems.

Its subcellular location is the secreted. It is found in the cell wall. The enzyme catalyses [(1-&gt;4)-alpha-D-galacturonosyl methyl ester](n) + n H2O = [(1-&gt;4)-alpha-D-galacturonosyl](n) + n methanol + n H(+). The protein operates within glycan metabolism; pectin degradation; 2-dehydro-3-deoxy-D-gluconate from pectin: step 1/5. Acts in the modification of cell walls via demethylesterification of cell wall pectin. The chain is Probable pectinesterase/pectinesterase inhibitor 16 (PME16) from Arabidopsis thaliana (Mouse-ear cress).